The sequence spans 286 residues: 2,3,4,5-tetrahydropyridine-2,6-dicarboxylate N-succinyltransferase (286 aa).

Substrate is bound by residues R111 and D148.

This sequence belongs to the transferase hexapeptide repeat family. As to quaternary structure, homotrimer.

The protein localises to the cytoplasm. The enzyme catalyses (S)-2,3,4,5-tetrahydrodipicolinate + succinyl-CoA + H2O = (S)-2-succinylamino-6-oxoheptanedioate + CoA. It functions in the pathway amino-acid biosynthesis; L-lysine biosynthesis via DAP pathway; LL-2,6-diaminopimelate from (S)-tetrahydrodipicolinate (succinylase route): step 1/3. The chain is 2,3,4,5-tetrahydropyridine-2,6-dicarboxylate N-succinyltransferase from Rhizobium etli (strain ATCC 51251 / DSM 11541 / JCM 21823 / NBRC 15573 / CFN 42).